Here is a 356-residue protein sequence, read N- to C-terminus: Na(+)/H(+) exchange regulatory cofactor NHE-RF1 (356 aa).

Ser-2 is subject to N-acetylserine. Phosphoserine is present on residues Ser-2 and Ser-46. The PDZ 1 domain maps to Leu-14 to Glu-94. The tract at residues Ala-113 to Leu-142 is disordered. A PDZ 2 domain is found at Leu-151–Glu-231. The segment at Asn-265–Leu-356 is disordered. Residues Ser-266, Ser-277, Ser-287, and Ser-288 each carry the phosphoserine modification. The segment covering Glu-272–Ser-288 has biased composition (low complexity). Phosphothreonine is present on Thr-290. Residues Ser-291 and Ser-299 each carry the phosphoserine modification. The span at Glu-307–Pro-317 shows a compositional bias: low complexity. Over residues Trp-346–Leu-356 the composition is skewed to basic and acidic residues.

Homodimer, and heterodimer with NHERF2. Binds the N-termini of EZR, RDX and MSN. Binds the C-termini of PDGFRA, PDGFRB, ADRB2, NOS2 and CFTR. Binds ARHGAP17, EPI64, RACK1, OPRK1, GNAQ, CTNNB1 and PLCB3. Binds PDZK1. Interacts with CLCN3. Binds the C-terminus of PAG1. In resting T-cells, part of a PAG1-NHERF1-MSN complex which is disrupted upon TCR activation. Forms a complex with CFTR and SLC4A7. Forms a complex with SLC4A7 and ATP6V1B1. Interacts with TRPC4 (via the PDZ-binding domain). Directly interacts with HTR4. Interacts (via the PDZ 1 domain) with PODXL (via the C-terminal PDZ-binding motif DTHL); interaction is not detected in glomerular epithelium cells. Interacts (via the PDZ 1 domain) with PODXL (via the C-terminal PDZ-binding motif DTHL); the interaction take place early in the secretory pathway and is necessary for its apical membrane sorting. Interacts with SLC26A3. Interacts with MCC. Interacts with SLC34A1. Interacts (via the PDZ domains) with SLC26A6 isoform 4 and isoform 5. Interacts (via PDZ domains) with ACE2 (via PDZ-binding motif); the interaction may enhance ACE2 membrane residence.

It localises to the cytoplasm. It is found in the apical cell membrane. The protein resides in the cell projection. The protein localises to the filopodium. Its subcellular location is the ruffle. It localises to the microvillus. It is found in the endomembrane system. In terms of biological role, scaffold protein that connects plasma membrane proteins with members of the ezrin/moesin/radixin family and thereby helps to link them to the actin cytoskeleton and to regulate their surface expression. Necessary for recycling of internalized ADRB2. Was first known to play a role in the regulation of the activity and subcellular location of SLC9A3. Necessary for cAMP-mediated phosphorylation and inhibition of SLC9A3. Involved in sperm capacitation. May participate in the regulation of the chloride and bicarbonate homeostasis in spermatozoa. May enhance Wnt signaling. May participate in HTR4 targeting to microvilli. Involved in the regulation of phosphate reabsorption in the renal proximal tubules. In Rattus norvegicus (Rat), this protein is Na(+)/H(+) exchange regulatory cofactor NHE-RF1 (Nherf1).